A 368-amino-acid chain; its full sequence is 4-hydroxy-3-methylbut-2-en-1-yl diphosphate synthase (flavodoxin) (368 aa).

Cys271, Cys274, Cys306, and Glu313 together coordinate [4Fe-4S] cluster.

This sequence belongs to the IspG family. [4Fe-4S] cluster is required as a cofactor.

The catalysed reaction is (2E)-4-hydroxy-3-methylbut-2-enyl diphosphate + oxidized [flavodoxin] + H2O + 2 H(+) = 2-C-methyl-D-erythritol 2,4-cyclic diphosphate + reduced [flavodoxin]. Its pathway is isoprenoid biosynthesis; isopentenyl diphosphate biosynthesis via DXP pathway; isopentenyl diphosphate from 1-deoxy-D-xylulose 5-phosphate: step 5/6. Its function is as follows. Converts 2C-methyl-D-erythritol 2,4-cyclodiphosphate (ME-2,4cPP) into 1-hydroxy-2-methyl-2-(E)-butenyl 4-diphosphate. The protein is 4-hydroxy-3-methylbut-2-en-1-yl diphosphate synthase (flavodoxin) of Haemophilus influenzae (strain PittGG).